Reading from the N-terminus, the 453-residue chain is DNA repair protein RadA (453 aa).

The segment at 10–27 adopts a C4-type zinc-finger fold; sequence CTECGATFPKWAGQCADC. ATP is bound at residue 96–103; sequence GDPGIGKS. Residues 252-256 carry the RadA KNRFG motif motif; that stretch reads KNRFG. The segment at 351-453 is lon-protease-like; that stretch reads DVFLNVVGGV…LEQALDALFE (103 aa).

It belongs to the RecA family. RadA subfamily.

Functionally, DNA-dependent ATPase involved in processing of recombination intermediates, plays a role in repairing DNA breaks. Stimulates the branch migration of RecA-mediated strand transfer reactions, allowing the 3' invading strand to extend heteroduplex DNA faster. Binds ssDNA in the presence of ADP but not other nucleotides, has ATPase activity that is stimulated by ssDNA and various branched DNA structures, but inhibited by SSB. Does not have RecA's homology-searching function. This is DNA repair protein RadA from Pseudomonas aeruginosa (strain ATCC 15692 / DSM 22644 / CIP 104116 / JCM 14847 / LMG 12228 / 1C / PRS 101 / PAO1).